We begin with the raw amino-acid sequence, 389 residues long: S-adenosylmethionine synthase (389 aa).

Position 15 (histidine 15) interacts with ATP. Aspartate 17 serves as a coordination point for Mg(2+). Glutamate 43 contacts K(+). Glutamate 56 and glutamine 99 together coordinate L-methionine. Residues 99–109 (QSPDIAQGVNE) form a flexible loop region. Residues 166-168 (DAK), 234-235 (RF), aspartate 243, 249-250 (RK), alanine 266, and lysine 270 contribute to the ATP site. An L-methionine-binding site is contributed by aspartate 243. Residue lysine 274 coordinates L-methionine.

The protein belongs to the AdoMet synthase family. As to quaternary structure, homotetramer; dimer of dimers. It depends on Mg(2+) as a cofactor. K(+) serves as cofactor.

Its subcellular location is the cytoplasm. It catalyses the reaction L-methionine + ATP + H2O = S-adenosyl-L-methionine + phosphate + diphosphate. Its pathway is amino-acid biosynthesis; S-adenosyl-L-methionine biosynthesis; S-adenosyl-L-methionine from L-methionine: step 1/1. Functionally, catalyzes the formation of S-adenosylmethionine (AdoMet) from methionine and ATP. The overall synthetic reaction is composed of two sequential steps, AdoMet formation and the subsequent tripolyphosphate hydrolysis which occurs prior to release of AdoMet from the enzyme. The polypeptide is S-adenosylmethionine synthase (Chromobacterium violaceum (strain ATCC 12472 / DSM 30191 / JCM 1249 / CCUG 213 / NBRC 12614 / NCIMB 9131 / NCTC 9757 / MK)).